Reading from the N-terminus, the 574-residue chain is Sulfate adenylyltransferase (574 aa).

Positions Met-1 to Tyr-170 are N-terminal. The interval Asp-171–Glu-395 is catalytic. Gln-198 contributes to the sulfate binding site. Residues Gln-198 to Asn-201 and Gly-292 to His-295 each bind ATP. Catalysis depends on residues Thr-199, Arg-200, and Asn-201. Arg-200 contacts sulfate. Residue Ala-296 participates in sulfate binding. Residue Met-334 coordinates ATP. The allosteric regulation domain; adenylyl-sulfate kinase-like stretch occupies residues Lys-396–Leu-574. 3'-phosphoadenylyl sulfate-binding positions include Glu-435 to Arg-438, Arg-452, Ile-478 to Ala-479, and Lys-516.

In the N-terminal section; belongs to the sulfate adenylyltransferase family. The protein in the C-terminal section; belongs to the APS kinase family. As to quaternary structure, homohexamer. Dimer of trimers.

The protein localises to the cytoplasm. The catalysed reaction is sulfate + ATP + H(+) = adenosine 5'-phosphosulfate + diphosphate. It participates in sulfur metabolism; hydrogen sulfide biosynthesis; sulfite from sulfate: step 1/3. Allosterically inhibited by 3'-phosphoadenosine 5'-phosphosulfate (PAPS). Its function is as follows. Catalyzes the first intracellular reaction of sulfate assimilation, forming adenosine-5'-phosphosulfate (APS) from inorganic sulfate and ATP. Plays an important role in sulfate activation as a component of the biosynthesis pathway of sulfur-containing amino acids. This chain is Sulfate adenylyltransferase, found in Gibberella zeae (strain ATCC MYA-4620 / CBS 123657 / FGSC 9075 / NRRL 31084 / PH-1) (Wheat head blight fungus).